We begin with the raw amino-acid sequence, 942 residues long: Lambda-carrageenase (942 aa).

Positions 1 to 25 are cleaved as a signal peptide; it reads MKIKILSAMIASSLLIGCVIPTVKA.

In terms of assembly, monomer.

The protein resides in the secreted. It catalyses the reaction Endohydrolysis of (1-&gt;4)-beta-linkages in the backbone of lambda-carrageenan, resulting in the tetrasaccharide alpha-D-Galp2,6S2-(1-&gt;3)-beta-D-Galp2S-(1-&gt;4)-alpha-D-Galp2,6S2-(1-&gt;3)-D-Galp2S.. In terms of biological role, hydrolyzes lambda-carrageenan with inversion of anomeric configuration. Does not hydrolyze iota- and kappa-carrageenans, agarose or porphyran. The sequence is that of Lambda-carrageenase from Pseudoalteromonas sp.